A 235-amino-acid chain; its full sequence is Small ribosomal subunit protein uS5 (235 aa).

The S5 DRBM domain maps to 60–123; the sequence is ENQEVLDIAL…NYAKMNIIEI (64 aa). Zn(2+) is bound by residues Cys-127, Cys-132, Cys-134, and His-138.

The protein belongs to the universal ribosomal protein uS5 family. Part of the 30S ribosomal subunit. Contacts protein S4. It depends on Zn(2+) as a cofactor.

Functionally, with S4 and S12 plays an important role in translational accuracy. This Thermococcus kodakarensis (strain ATCC BAA-918 / JCM 12380 / KOD1) (Pyrococcus kodakaraensis (strain KOD1)) protein is Small ribosomal subunit protein uS5.